The chain runs to 237 residues: Riboflavin kinase (237 aa).

The segment at 1–23 (MSLPNPDNRPLLIGPPTGPEAPF) is disordered. Mg(2+)-binding residues include threonine 46 and asparagine 48. The segment at 82-126 (VLYQKPPTSEPVMMDPVQQQQQQQQQQRNQQQQQEGGVGSAQQEK) is disordered. Low complexity predominate over residues 99–115 (QQQQQQQQQQRNQQQQQ). Glutamate 158 functions as the Nucleophile in the catalytic mechanism.

The protein belongs to the flavokinase family. It depends on Zn(2+) as a cofactor. The cofactor is Mg(2+).

It carries out the reaction riboflavin + ATP = FMN + ADP + H(+). It functions in the pathway cofactor biosynthesis; FMN biosynthesis; FMN from riboflavin (ATP route): step 1/1. In terms of biological role, catalyzes the phosphorylation of riboflavin (vitamin B2) to form flavin mononucleotide (FMN) coenzyme. The protein is Riboflavin kinase (fmn1) of Neurospora crassa (strain ATCC 24698 / 74-OR23-1A / CBS 708.71 / DSM 1257 / FGSC 987).